Reading from the N-terminus, the 149-residue chain is Large ribosomal subunit protein bL9 (149 aa).

It belongs to the bacterial ribosomal protein bL9 family.

Its function is as follows. Binds to the 23S rRNA. The protein is Large ribosomal subunit protein bL9 of Klebsiella pneumoniae (strain 342).